The following is a 431-amino-acid chain: CinA-like protein (431 aa).

It belongs to the CinA family.

This chain is CinA-like protein, found in Chlorobium luteolum (strain DSM 273 / BCRC 81028 / 2530) (Pelodictyon luteolum).